Here is a 142-residue protein sequence, read N- to C-terminus: Transcriptional regulator MraZ (142 aa).

SpoVT-AbrB domains follow at residues 5–51 (ASAL…PRPE) and 77–120 (AMDV…DSQT).

This sequence belongs to the MraZ family. Forms oligomers.

The protein localises to the cytoplasm. The protein resides in the nucleoid. The sequence is that of Transcriptional regulator MraZ from Burkholderia cenocepacia (strain ATCC BAA-245 / DSM 16553 / LMG 16656 / NCTC 13227 / J2315 / CF5610) (Burkholderia cepacia (strain J2315)).